Here is a 590-residue protein sequence, read N- to C-terminus: V-type ATP synthase alpha chain (590 aa).

231-238 (GPFGSGKT) provides a ligand contact to ATP.

The protein belongs to the ATPase alpha/beta chains family.

It catalyses the reaction ATP + H2O + 4 H(+)(in) = ADP + phosphate + 5 H(+)(out). In terms of biological role, produces ATP from ADP in the presence of a proton gradient across the membrane. The V-type alpha chain is a catalytic subunit. The chain is V-type ATP synthase alpha chain from Clostridium botulinum (strain ATCC 19397 / Type A).